A 496-amino-acid polypeptide reads, in one-letter code: NADP-dependent glyceraldehyde-3-phosphate dehydrogenase (496 aa).

Residues Arg116 and 169–170 (NY) each bind substrate. Residues Lys192, Thr195, and Asp230 each contribute to the NADP(+) site. 245–249 (GGDTG) is a binding site for NAD(+). The Proton acceptor role is filled by Glu264. Substrate is bound at residue 297-299 (RCT). The active-site Nucleophile is Cys298. Glu391 lines the NADP(+) pocket. Substrate is bound at residue Arg451.

Belongs to the aldehyde dehydrogenase family.

It is found in the cytoplasm. The catalysed reaction is D-glyceraldehyde 3-phosphate + NADP(+) + H2O = (2R)-3-phosphoglycerate + NADPH + 2 H(+). In terms of biological role, important as a means of generating NADPH for biosynthetic reactions. The polypeptide is NADP-dependent glyceraldehyde-3-phosphate dehydrogenase (GAPN) (Pisum sativum (Garden pea)).